A 216-amino-acid polypeptide reads, in one-letter code: GTPase IMAP family member GIMD1 (216 aa).

In terms of domain architecture, AIG1-type G spans 5–216; the sequence is KMTINLALFG…ENCYQVLTFK (212 aa). GTP-binding positions include 14–22, serine 35, and 147–149; these read GMTQSGKSS and HAE.

The protein belongs to the TRAFAC class TrmE-Era-EngA-EngB-Septin-like GTPase superfamily. AIG1/Toc34/Toc159-like paraseptin GTPase family. IAN subfamily.

This chain is GTPase IMAP family member GIMD1 (GIMD1), found in Bos taurus (Bovine).